The chain runs to 197 residues: Rac-like GTP-binding protein ARAC11 (197 aa).

13–20 (GDGAVGKT) lines the GTP pocket. The short motif at 35 to 43 (YVPTVFDNF) is the Effector region element. Residues 60–64 (DTAGQ) and 118–121 (TKLD) each bind GTP. Cysteine methyl ester is present on cysteine 194. Cysteine 194 carries the S-geranylgeranyl cysteine lipid modification. A propeptide spans 195–197 (SIL) (removed in mature form).

This sequence belongs to the small GTPase superfamily. Rho family. In terms of assembly, part of a complex containing ROPGEF1 and PRK2. Interacts with UGT1, ICR1, ICR2, ICR3, ICR4 and ICR5. Interacts with PHIP1 when activated by GTP. Exclusively expressed in mature pollen and pollen tubes.

The protein resides in the cytoplasm. It is found in the membrane. The enzyme catalyses GTP + H2O = GDP + phosphate + H(+). In terms of biological role, may be involved in cell polarity control during the actin-dependent tip growth of pollen tubes. May regulate callose synthase 1 (CALS1) activity through the interaction with UGT1. Inactive GDP-bound Rho GTPases reside in the cytosol, are found in a complex with Rho GDP-dissociation inhibitors (Rho GDIs), and are released from the GDI protein in order to translocate to membranes upon activation. The chain is Rac-like GTP-binding protein ARAC11 from Arabidopsis thaliana (Mouse-ear cress).